Consider the following 182-residue polypeptide: Inner membrane-spanning protein YciB (182 aa).

Transmembrane regions (helical) follow at residues 22–42 (IYIA…VTYA), 50–70 (MHLI…IFHD), 72–92 (AFIK…LAVS), 118–138 (VTWY…YVAF), and 148–168 (FKVF…VVYL).

It belongs to the YciB family.

It localises to the cell inner membrane. In terms of biological role, plays a role in cell envelope biogenesis, maintenance of cell envelope integrity and membrane homeostasis. This is Inner membrane-spanning protein YciB from Shewanella woodyi (strain ATCC 51908 / MS32).